Here is a 92-residue protein sequence, read N- to C-terminus: Large ribosomal subunit protein eL43 (92 aa).

A C4-type zinc finger spans residues 39 to 60 (CQFCGKDAMKRQAVGIWGCKSC).

It belongs to the eukaryotic ribosomal protein eL43 family.

This Cryptochiton stelleri (Giant gumboot chiton) protein is Large ribosomal subunit protein eL43 (RPL37A).